A 443-amino-acid chain; its full sequence is ATP-dependent protease ATPase subunit HslU (443 aa).

ATP contacts are provided by residues Ile18, 60 to 65, Asp256, Glu321, and Arg393; that span reads GVGKTE.

Belongs to the ClpX chaperone family. HslU subfamily. As to quaternary structure, a double ring-shaped homohexamer of HslV is capped on each side by a ring-shaped HslU homohexamer. The assembly of the HslU/HslV complex is dependent on binding of ATP.

It localises to the cytoplasm. In terms of biological role, ATPase subunit of a proteasome-like degradation complex; this subunit has chaperone activity. The binding of ATP and its subsequent hydrolysis by HslU are essential for unfolding of protein substrates subsequently hydrolyzed by HslV. HslU recognizes the N-terminal part of its protein substrates and unfolds these before they are guided to HslV for hydrolysis. This is ATP-dependent protease ATPase subunit HslU from Buchnera aphidicola subsp. Schizaphis graminum (strain Sg).